The sequence spans 227 residues: Ribosomal RNA large subunit methyltransferase E (227 aa).

The S-adenosyl-L-methionine site is built by glycine 78, tryptophan 80, aspartate 103, aspartate 119, and aspartate 143. The active-site Proton acceptor is the lysine 183.

Belongs to the class I-like SAM-binding methyltransferase superfamily. RNA methyltransferase RlmE family.

The protein resides in the cytoplasm. The enzyme catalyses uridine(2552) in 23S rRNA + S-adenosyl-L-methionine = 2'-O-methyluridine(2552) in 23S rRNA + S-adenosyl-L-homocysteine + H(+). In terms of biological role, specifically methylates the uridine in position 2552 of 23S rRNA at the 2'-O position of the ribose in the fully assembled 50S ribosomal subunit. The polypeptide is Ribosomal RNA large subunit methyltransferase E (Rickettsia felis (strain ATCC VR-1525 / URRWXCal2) (Rickettsia azadi)).